The chain runs to 55 residues: Protein CADMIUM TOLERANCE 1 (55 aa).

Residues 24-40 (GCLYACIFTALCCFCCY) form a helical membrane-spanning segment.

It belongs to the CYSTM1 family.

It is found in the cell membrane. It localises to the secreted. The protein localises to the cell wall. Its function is as follows. Confers resistance to heavy metal ions (e.g. cadmium (CdCl(2)) and copper (CuCl(2))) by chelating them at the plasma membrane of root cells, thus stopping their entry and reducing their accumulation. Binds to aluminium (Al). In Oryza sativa subsp. indica (Rice), this protein is Protein CADMIUM TOLERANCE 1.